The sequence spans 336 residues: Glucan endo-1,3-beta-glucosidase A (336 aa).

Residues 1-23 form the signal peptide; it reads MAFLSSLLASLLLVGLLIQITGA. Pyrrolidone carboxylic acid is present on Gln-24. Residue Glu-118 is the Proton donor of the active site. The Nucleophile role is filled by Glu-257.

The protein belongs to the glycosyl hydrolase 17 family.

The protein localises to the secreted. It is found in the extracellular space. It carries out the reaction Hydrolysis of (1-&gt;3)-beta-D-glucosidic linkages in (1-&gt;3)-beta-D-glucans.. Functionally, implicated in the defense of plants against pathogens. The polypeptide is Glucan endo-1,3-beta-glucosidase A (Solanum lycopersicum (Tomato)).